Here is a 228-residue protein sequence, read N- to C-terminus: Probable ribosomal RNA small subunit methyltransferase A (228 aa).

Residues His-9, Leu-11, Gly-34, Glu-55, Asp-78, and Asn-93 each contribute to the S-adenosyl-L-methionine site.

It belongs to the class I-like SAM-binding methyltransferase superfamily. rRNA adenine N(6)-methyltransferase family. RsmA subfamily.

The protein localises to the cytoplasm. Its function is as follows. Specifically dimethylates two adjacent adenosines in the loop of a conserved hairpin near the 3'-end of 16S rRNA in the 30S particle. May play a critical role in biogenesis of 30S subunits. The polypeptide is Probable ribosomal RNA small subunit methyltransferase A (Pyrobaculum aerophilum (strain ATCC 51768 / DSM 7523 / JCM 9630 / CIP 104966 / NBRC 100827 / IM2)).